The following is a 171-amino-acid chain: Adenine phosphoribosyltransferase (171 aa).

This sequence belongs to the purine/pyrimidine phosphoribosyltransferase family. As to quaternary structure, homodimer.

Its subcellular location is the cytoplasm. It carries out the reaction AMP + diphosphate = 5-phospho-alpha-D-ribose 1-diphosphate + adenine. It functions in the pathway purine metabolism; AMP biosynthesis via salvage pathway; AMP from adenine: step 1/1. Its function is as follows. Catalyzes a salvage reaction resulting in the formation of AMP, that is energically less costly than de novo synthesis. In Natranaerobius thermophilus (strain ATCC BAA-1301 / DSM 18059 / JW/NM-WN-LF), this protein is Adenine phosphoribosyltransferase.